The primary structure comprises 1295 residues: Serine protease pet autotransporter (1295 aa).

The first 52 residues, Met-1–Ala-52, serve as a signal peptide directing secretion. One can recognise a Peptidase S6 domain in the interval Asn-54–Glu-304. Active-site charge relay system residues include His-124, Asp-153, and Ser-260. The Autotransporter domain occupies Asp-1029 to Phe-1295.

Cleaved to release the mature protein from the outer membrane.

It localises to the periplasm. Its subcellular location is the secreted. The protein localises to the cell surface. It is found in the cell outer membrane. Inhibition of cytotoxic activity by phenylmethylsulfonyl fluoride. Its function is as follows. Serine protease with enterotoxic and cytotoxic activity. Internalization into the host cell is required for the induction of cytopathic effects. However, the serine activity is not necessary for secretion and internalization into the host cell. The protein is Serine protease pet autotransporter (pet) of Escherichia coli O44:H18 (strain 042 / EAEC).